An 89-amino-acid chain; its full sequence is Small ribosomal subunit protein bS20 (89 aa).

Belongs to the bacterial ribosomal protein bS20 family.

In terms of biological role, binds directly to 16S ribosomal RNA. This is Small ribosomal subunit protein bS20 from Sulfurovum sp. (strain NBC37-1).